Here is a 730-residue protein sequence, read N- to C-terminus: Phosphoribosylformylglycinamidine synthase subunit PurL (730 aa).

His-44 is an active-site residue. 2 residues coordinate ATP: Tyr-47 and Lys-86. Residue Glu-88 coordinates Mg(2+). Residues 89-92 (SHNH) and Arg-111 each bind substrate. His-90 serves as the catalytic Proton acceptor. Asp-112 contacts Mg(2+). Gln-235 lines the substrate pocket. Asp-263 serves as a coordination point for Mg(2+). Residue 307-309 (ESQ) participates in substrate binding. ATP-binding residues include Asn-489 and Gly-526. Residue Asn-527 coordinates Mg(2+). Ser-529 is a binding site for substrate.

Belongs to the FGAMS family. In terms of assembly, monomer. Part of the FGAM synthase complex composed of 1 PurL, 1 PurQ and 2 PurS subunits.

Its subcellular location is the cytoplasm. The catalysed reaction is N(2)-formyl-N(1)-(5-phospho-beta-D-ribosyl)glycinamide + L-glutamine + ATP + H2O = 2-formamido-N(1)-(5-O-phospho-beta-D-ribosyl)acetamidine + L-glutamate + ADP + phosphate + H(+). It participates in purine metabolism; IMP biosynthesis via de novo pathway; 5-amino-1-(5-phospho-D-ribosyl)imidazole from N(2)-formyl-N(1)-(5-phospho-D-ribosyl)glycinamide: step 1/2. In terms of biological role, part of the phosphoribosylformylglycinamidine synthase complex involved in the purines biosynthetic pathway. Catalyzes the ATP-dependent conversion of formylglycinamide ribonucleotide (FGAR) and glutamine to yield formylglycinamidine ribonucleotide (FGAM) and glutamate. The FGAM synthase complex is composed of three subunits. PurQ produces an ammonia molecule by converting glutamine to glutamate. PurL transfers the ammonia molecule to FGAR to form FGAM in an ATP-dependent manner. PurS interacts with PurQ and PurL and is thought to assist in the transfer of the ammonia molecule from PurQ to PurL. The polypeptide is Phosphoribosylformylglycinamidine synthase subunit PurL (Pelagibacter ubique (strain HTCC1062)).